A 211-amino-acid polypeptide reads, in one-letter code: Lipoprotein signal peptidase (211 aa).

3 consecutive transmembrane segments (helical) span residues 12-32, 96-116, and 127-147; these read LLALLFVTLVAIDQWTKYLAV, AFRNGFFTLVSLGAVAFILHY, and LQVALALVLSGAVGNFLDRLA. Active-site residues include Asp153 and Asp174. The helical transmembrane segment at 167-187 threads the bilayer; that stretch reads WPTFNIADSLIVVGVALLVLH.

It belongs to the peptidase A8 family.

It is found in the cell inner membrane. The catalysed reaction is Release of signal peptides from bacterial membrane prolipoproteins. Hydrolyzes -Xaa-Yaa-Zaa-|-(S,diacylglyceryl)Cys-, in which Xaa is hydrophobic (preferably Leu), and Yaa (Ala or Ser) and Zaa (Gly or Ala) have small, neutral side chains.. It participates in protein modification; lipoprotein biosynthesis (signal peptide cleavage). Functionally, this protein specifically catalyzes the removal of signal peptides from prolipoproteins. This chain is Lipoprotein signal peptidase, found in Anaeromyxobacter sp. (strain Fw109-5).